A 244-amino-acid polypeptide reads, in one-letter code: tRNA (guanine-N(7)-)-methyltransferase (244 aa).

4 residues coordinate S-adenosyl-L-methionine: E74, E99, D126, and D149. Residue D149 is part of the active site. Substrate is bound by residues K153, D185, and 222-225 (TKFE).

Belongs to the class I-like SAM-binding methyltransferase superfamily. TrmB family.

It carries out the reaction guanosine(46) in tRNA + S-adenosyl-L-methionine = N(7)-methylguanosine(46) in tRNA + S-adenosyl-L-homocysteine. The protein operates within tRNA modification; N(7)-methylguanine-tRNA biosynthesis. Catalyzes the formation of N(7)-methylguanine at position 46 (m7G46) in tRNA. In Colwellia psychrerythraea (strain 34H / ATCC BAA-681) (Vibrio psychroerythus), this protein is tRNA (guanine-N(7)-)-methyltransferase.